We begin with the raw amino-acid sequence, 322 residues long: Ribose-phosphate pyrophosphokinase 1 (322 aa).

Residues 39–41 (DGE) and 98–99 (RQ) each bind ATP. Mg(2+) contacts are provided by histidine 132 and aspartate 173. Residue lysine 196 is part of the active site. D-ribose 5-phosphate is bound by residues arginine 198, aspartate 224, and 228 to 232 (DTAGT).

Belongs to the ribose-phosphate pyrophosphokinase family. Class I subfamily. In terms of assembly, homohexamer. Mg(2+) is required as a cofactor.

The protein resides in the cytoplasm. The catalysed reaction is D-ribose 5-phosphate + ATP = 5-phospho-alpha-D-ribose 1-diphosphate + AMP + H(+). The protein operates within metabolic intermediate biosynthesis; 5-phospho-alpha-D-ribose 1-diphosphate biosynthesis; 5-phospho-alpha-D-ribose 1-diphosphate from D-ribose 5-phosphate (route I): step 1/1. Its function is as follows. Involved in the biosynthesis of the central metabolite phospho-alpha-D-ribosyl-1-pyrophosphate (PRPP) via the transfer of pyrophosphoryl group from ATP to 1-hydroxyl of ribose-5-phosphate (Rib-5-P). The chain is Ribose-phosphate pyrophosphokinase 1 from Streptococcus agalactiae serotype III (strain NEM316).